A 442-amino-acid polypeptide reads, in one-letter code: tRNA-2-methylthio-N(6)-dimethylallyladenosine synthase (442 aa).

The MTTase N-terminal domain occupies 5-122 (KKVFIKTLGC…LPEMIKQKQK (118 aa)). [4Fe-4S] cluster contacts are provided by Cys-14, Cys-51, Cys-85, Cys-159, Cys-163, and Cys-166. The region spanning 145–378 (KAEGAKAYVS…DLLNSNAQII (234 aa)) is the Radical SAM core domain. Positions 380 to 442 (RQMVGTNQRI…LPNSLRGELI (63 aa)) constitute a TRAM domain.

Belongs to the methylthiotransferase family. MiaB subfamily. Monomer. [4Fe-4S] cluster serves as cofactor.

The protein resides in the cytoplasm. The enzyme catalyses N(6)-dimethylallyladenosine(37) in tRNA + (sulfur carrier)-SH + AH2 + 2 S-adenosyl-L-methionine = 2-methylsulfanyl-N(6)-dimethylallyladenosine(37) in tRNA + (sulfur carrier)-H + 5'-deoxyadenosine + L-methionine + A + S-adenosyl-L-homocysteine + 2 H(+). In terms of biological role, catalyzes the methylthiolation of N6-(dimethylallyl)adenosine (i(6)A), leading to the formation of 2-methylthio-N6-(dimethylallyl)adenosine (ms(2)i(6)A) at position 37 in tRNAs that read codons beginning with uridine. In Francisella tularensis subsp. holarctica (strain LVS), this protein is tRNA-2-methylthio-N(6)-dimethylallyladenosine synthase.